Here is a 574-residue protein sequence, read N- to C-terminus: Desiccation/radiation resistance protein DR_1769 (574 aa).

The first 33 residues, 1–33 (MPDPAARRFSLPPFPLAALALSVALLGAPASLA), serve as a signal peptide directing secretion. Low complexity predominate over residues 400–438 (TAQTQARQAAAAASTSQQPRLPTLAQAPAPTPAPAQTTP). The segment at 400–461 (TAQTQARQAA…APVPPVASPA (62 aa)) is disordered. Positions 439 to 459 (RPQPTPAQPATPAAPVPPVAS) are enriched in pro residues.

Functionally, plays an important role in resistance to desiccation and radiation, maybe by protecting genome integrity under extreme conditions. The protein is Desiccation/radiation resistance protein DR_1769 of Deinococcus radiodurans (strain ATCC 13939 / DSM 20539 / JCM 16871 / CCUG 27074 / LMG 4051 / NBRC 15346 / NCIMB 9279 / VKM B-1422 / R1).